Here is a 476-residue protein sequence, read N- to C-terminus: Protein transport protein SEC61 subunit alpha (476 aa).

Residues 1–33 (MSSLRFLDLVKPFVPFLPEVQQPETKIPFNQKL) are Cytoplasmic-facing. Residues 34-54 (MWTGLTLLIFLVMSQMPLYGI) form a helical membrane-spanning segment. At 55–76 (VSSDTSDPLYWLRMMMASNRGT) the chain is on the lumenal side. A helical membrane pass occupies residues 77-97 (LMELGITPIISSGMVFQLLAG). Residues 98–119 (THMIDVNLDLKADRELYQTAQK) lie on the Cytoplasmic side of the membrane. A helical transmembrane segment spans residues 120–140 (LFAVILSIGTATVYVFTGLYG). Residues 141-146 (PPSDLG) are Lumenal-facing. The chain crosses the membrane as a helical span at residues 147-167 (AGIVFLLILQLVVAGMIVILL). Over 168-246 (DELLQKGYGL…YRQNLPNIMN (79 aa)) the chain is Cytoplasmic. The helical transmembrane segment at 247 to 267 (LLATLVVFAAVIYLQGFRVEI) threads the bilayer. The Lumenal segment spans residues 268–361 (PVKSSRQRGA…KDALLDPIHT (94 aa)). A helical transmembrane segment spans residues 362–382 (AVYIAYMLTACAVFSKTWIEV). At 383–415 (SGSSPRDVAKQLKDQGLVMAGHREQSMYKELKR) the chain is on the cytoplasmic side. Residues 416–434 (IIPTAAAFGGACIGALSVA) form a helical membrane-spanning segment. The Lumenal segment spans residues 435-440 (SDLMGA). The helical transmembrane segment at 441 to 458 (LGSGTGTLLAVTIIYGYF) threads the bilayer. Residues 459-476 (EIAAKEGDLQGMKGMIMG) lie on the Cytoplasmic side of the membrane.

This sequence belongs to the SecY/SEC61-alpha family. Heterotrimeric complex composed of SEC61-alpha, SEC61-beta and SEC61-gamma.

The protein resides in the endoplasmic reticulum membrane. Appears to play a crucial role in the insertion of secretory and membrane polypeptides into the ER. It is required for assembly of membrane and secretory proteins and is essential for cell growth. It interacts with other membrane proteins required for protein translocation. Upon binding to SEC62/63 complex, secretory precursor polypeptides may engage SEC61 to begin membrane penetration event. A cycle of assembly and disassembly of SEC62/63 from SEC61 may govern the activity of the translocase. This Neurospora crassa (strain ATCC 24698 / 74-OR23-1A / CBS 708.71 / DSM 1257 / FGSC 987) protein is Protein transport protein SEC61 subunit alpha (sec-61).